The following is a 316-amino-acid chain: N-acetylmuramic acid 6-phosphate etherase (316 aa).

The SIS domain maps to 66 to 229; that stretch reads IVAAIGRGGR…STASMIRLGK (164 aa). The active-site Proton donor is the E94. E125 is a catalytic residue.

It belongs to the GCKR-like family. MurNAc-6-P etherase subfamily. Homodimer.

It carries out the reaction N-acetyl-D-muramate 6-phosphate + H2O = N-acetyl-D-glucosamine 6-phosphate + (R)-lactate. The protein operates within amino-sugar metabolism; 1,6-anhydro-N-acetylmuramate degradation. It functions in the pathway amino-sugar metabolism; N-acetylmuramate degradation. It participates in cell wall biogenesis; peptidoglycan recycling. Its function is as follows. Specifically catalyzes the cleavage of the D-lactyl ether substituent of MurNAc 6-phosphate, producing GlcNAc 6-phosphate and D-lactate. Together with AnmK, is also required for the utilization of anhydro-N-acetylmuramic acid (anhMurNAc) either imported from the medium or derived from its own cell wall murein, and thus plays a role in cell wall recycling. The chain is N-acetylmuramic acid 6-phosphate etherase from Jannaschia sp. (strain CCS1).